A 629-amino-acid chain; its full sequence is tRNA uridine 5-carboxymethylaminomethyl modification enzyme MnmG (629 aa).

Residues 13 to 18 (GGGHAG), V125, and S180 contribute to the FAD site. Position 273–287 (273–287 (GPRYCPSIEDKVMRF)) interacts with NAD(+). Q370 contributes to the FAD binding site.

The protein belongs to the MnmG family. As to quaternary structure, homodimer. Heterotetramer of two MnmE and two MnmG subunits. The cofactor is FAD.

It localises to the cytoplasm. NAD-binding protein involved in the addition of a carboxymethylaminomethyl (cmnm) group at the wobble position (U34) of certain tRNAs, forming tRNA-cmnm(5)s(2)U34. The sequence is that of tRNA uridine 5-carboxymethylaminomethyl modification enzyme MnmG from Serratia proteamaculans (strain 568).